Reading from the N-terminus, the 102-residue chain is A-type ATP synthase subunit F (102 aa).

It belongs to the V-ATPase F subunit family. Has multiple subunits with at least A(3), B(3), C, D, E, F, H, I and proteolipid K(x).

The protein resides in the cell membrane. In terms of biological role, component of the A-type ATP synthase that produces ATP from ADP in the presence of a proton gradient across the membrane. The sequence is that of A-type ATP synthase subunit F from Thermococcus gammatolerans (strain DSM 15229 / JCM 11827 / EJ3).